A 1490-amino-acid polypeptide reads, in one-letter code: MAGNSLVLPIVLWGRKAPTHCISAVLLTDDGATIVTGCHDGQICLWDLSVELQINPRALLFGHTASITCLSKACASSDKQYIVSASESGEMCLWDVSDGRCIEFTKLACTHTGIQFYQFSVGNQREGRLLCHGHYPEILVVDATSLEVLYSLVSKISPDWISSMSIIRSHRTQEDTVVALSVTGILKVWIVTSEISDMQDTEPIFEEESKPIYCQNCQSISFCAFTQRSLLVVCSKYWRVFDAGDYSLLCSGPSENGQTWTGGDFVSSDKVIIWTENGQSYIYKLPASCLPASDSFRSDVGKAVENLIPPVQHILLDRKDKELLICPPVTRFFYGCREYFHKLLIQGDSSGRLNIWNISDTADKQGSEEGLAMTTSISLQEAFDKLNPCPAGIIDQLSVIPNSNEPLKVTASVYIPAHGRLVCGREDGSIVIVPATQTAIVQLLQGEHMLRRGWPPHRTLRGHRNKVTCLLYPHQVSARYDQRYLISGGVDFSVIIWDIFSGEMKHIFCVHGGEITQLLVPPENCSARVQHCICSVASDHSVGLLSLREKKCIMLASRHLFPIQVIKWRPSDDYLVVGCSDGSVYVWQMDTGALDRCVMGITAVEILNACDEAVPAAVDSLSHPAVNLKQAMTRRSLAALKNMAHHKLQTLATNLLASEASDKGNLPKYSHNSLMVQAIKTNLTDPDIHVLFFDVEALIIQLLTEEASRPNTALISPENLQKASGSSDKGGSFLTGKRAAVLFQQVKETIKENIKEHLLDDEEEDEEIMRQRREESDPEYRSSKSKPLTLLEYNLTMDTAKLFMSCLHAWGLNEVLDEVCLDRLGMLKPHCTVSFGLLSRGGHMSLMLPGYNQPACKLSHGKTEVGRKLPASEGVGKGTYGVSRAVTTQHLLSIISLANTLMSMTNATFIGDHMKKGPTRPPRPSTPDLSKARGSPPTSSNIVQGQIKQVAAPVVSARSDADHSGSDPPSAPALHTCFLVNEGWSQLAAMHCVMLPDLLGLDKFRPPLLEMLARRWQDRCLEVREAAQALLLAELRRIEQAGRKEAIDAWAPYLPQYIDHVISPGVTSEAAQTITTAPDASGPEAKVQEEEHDLVDDDITTGCLSSVPQMKKISTSYEERRKQATAIVLLGVIGAEFGAEIEPPKLLTRPRSSSQIPEGFGLTSGGSNYSLARHTCKALTFLLLQPPSPKLPPHSTIRRTAIDLIGRGFTVWEPYMDVSAVLMGLLELCADAEKQLANITMGLPLSPAADSARSARHALSLIATARPPAFITTIAKEVHRHTALAANTQSQQNMHTTTLARAKGEILRVIEILIEKMPTDVVDLLVEVMDIIMYCLEGSLVKKKGLQECFPAICRFYMVSYYERNHRIAVGARHGSVALYDIRTGKCQTIHGHKGPITAVAFAPDGRYLATYSNTDSHISFWQMNTSLLGSIGMLNSAPQLRCIKTYQVPPVQPASPGSHNALKLARLIWTSNRNVILMAHDGKEHRFMV.

WD repeat units follow at residues 17–56 (APTH…QINP), 62–104 (GHTA…CIEF), 156–199 (ISPD…SDMQ), 324–366 (LICP…DKQG), 404–443 (NEPL…IVQL), 462–507 (GHRN…MKHI), and 558–597 (RHLF…LDRC). Disordered regions lie at residues 761 to 783 (DEEE…YRSS) and 911 to 945 (GDHM…IVQG). Residues 768–782 (IMRQRREESDPEYRS) are compositionally biased toward basic and acidic residues. Ser935 bears the Phosphoserine mark. A compositionally biased stretch (polar residues) spans 936-945 (PPTSSNIVQG). WD repeat units follow at residues 1351–1390 (PAIC…CQTI) and 1392–1432 (GHKG…LGSI). At Ser1456 the chain carries Phosphoserine.

This Homo sapiens (Human) protein is WD repeat-containing protein 7 (WDR7).